The following is a 159-amino-acid chain: S-ribosylhomocysteine lyase (159 aa).

Fe cation is bound by residues H53, H57, and C124.

This sequence belongs to the LuxS family. In terms of assembly, homodimer. It depends on Fe cation as a cofactor.

The catalysed reaction is S-(5-deoxy-D-ribos-5-yl)-L-homocysteine = (S)-4,5-dihydroxypentane-2,3-dione + L-homocysteine. Involved in the synthesis of autoinducer 2 (AI-2) which is secreted by bacteria and is used to communicate both the cell density and the metabolic potential of the environment. The regulation of gene expression in response to changes in cell density is called quorum sensing. Catalyzes the transformation of S-ribosylhomocysteine (RHC) to homocysteine (HC) and 4,5-dihydroxy-2,3-pentadione (DPD). This is S-ribosylhomocysteine lyase from Desulfotalea psychrophila (strain LSv54 / DSM 12343).